A 255-amino-acid chain; its full sequence is MKESTMAQTQARFDRVRWEPGVYAIVGATGIGKSAEASKLALSHSAPIVVADRIQCYSDLLVTSGRAFDAKVEGLNRVWLDNRTIHQGNFDPDEAFDRLIKVLTSYVDRGEAVVMEGGSISLILRFAQTISNLPFPAVVNVMPIPDRQHYFAQQCARARQMLRGDSTGRNLLTELAEAWVLGDQHNFIASVAGLDCVLDWCATHSVTPEELANRDLTTEVLDELAASMGGRYVEHGVLQQEIFLRTFGAPGVTAR.

This sequence belongs to the isopentenyl transferase family.

The enzyme catalyses dimethylallyl diphosphate + AMP = N(6)-(dimethylallyl)adenosine 5'-phosphate + diphosphate. Functionally, transfers dimethylallyl groups to AMP as part of the biosynthesis of cytokinin phytohormones. This is Adenylate dimethylallyltransferase (fas4) from Rhodococcoides fascians (Rhodococcus fascians).